Reading from the N-terminus, the 104-residue chain is Putative ankyrin repeat protein L677 (104 aa).

3 ANK repeats span residues 16-43, 44-73, and 75-102; these read FNKSSLEIACIENDIGTVKKIINLNPNL, DISHCLNLAIESKNYQIVKFLLKKNISNSV, and LEAYDCACINGKISIMELLIQYLNNKSI.

The polypeptide is Putative ankyrin repeat protein L677 (Acanthamoeba polyphaga (Amoeba)).